The primary structure comprises 521 residues: Protein NRT1/ PTR FAMILY 5.5 (521 aa).

12 helical membrane-spanning segments follow: residues 3-23 (VLSW…LYLT), 35-55 (AIVN…QFLV), 62-82 (FWML…LAIS), 96-116 (FYVA…SLGV), 134-154 (LVSF…AAIA), 165-185 (FTIP…GACS), 279-299 (VPLF…NTFF), 310-327 (FGSW…SEAA), 356-376 (PYGI…AAHV), 394-414 (VPMS…ITGI), 440-460 (VGVC…VGSV), and 478-498 (YYWV…IVTY).

It belongs to the major facilitator superfamily. Proton-dependent oligopeptide transporter (POT/PTR) (TC 2.A.17) family. Expressed in roots.

It localises to the membrane. This chain is Protein NRT1/ PTR FAMILY 5.5 (NPF5.5), found in Arabidopsis thaliana (Mouse-ear cress).